Here is a 540-residue protein sequence, read N- to C-terminus: ADP,ATP carrier protein 2 (540 aa).

11 helical membrane-spanning segments follow: residues phenylalanine 24–leucine 44, valine 62–tyrosine 82, valine 94–tyrosine 114, isoleucine 151–leucine 171, serine 223–tyrosine 243, leucine 295–valine 315, isoleucine 337–isoleucine 357, leucine 367–alanine 387, isoleucine 391–glycine 411, serine 458–leucine 478, and valine 480–glycine 500.

This sequence belongs to the ADP/ATP translocase tlc family.

Its subcellular location is the cell membrane. This is ADP,ATP carrier protein 2 (tlcB) from Chlamydia pneumoniae (Chlamydophila pneumoniae).